A 102-amino-acid polypeptide reads, in one-letter code: NADH-quinone oxidoreductase subunit K 1 (102 aa).

3 helical membrane passes run 5–25 (LSHY…GIFL), 31–51 (IVIL…MVAF), and 65–85 (LFIL…LVVF).

The protein belongs to the complex I subunit 4L family. In terms of assembly, NDH-1 is composed of 14 different subunits. Subunits NuoA, H, J, K, L, M, N constitute the membrane sector of the complex.

It localises to the cell inner membrane. The catalysed reaction is a quinone + NADH + 5 H(+)(in) = a quinol + NAD(+) + 4 H(+)(out). NDH-1 shuttles electrons from NADH, via FMN and iron-sulfur (Fe-S) centers, to quinones in the respiratory chain. The immediate electron acceptor for the enzyme in this species is believed to be ubiquinone. Couples the redox reaction to proton translocation (for every two electrons transferred, four hydrogen ions are translocated across the cytoplasmic membrane), and thus conserves the redox energy in a proton gradient. The sequence is that of NADH-quinone oxidoreductase subunit K 1 from Rhizobium etli (strain ATCC 51251 / DSM 11541 / JCM 21823 / NBRC 15573 / CFN 42).